The primary structure comprises 153 residues: Large ribosomal subunit protein uL15 (153 aa).

The interval 21-42 (RGIGSGKGKTGGRGIKGQKSRS) is disordered. The segment covering 23-35 (IGSGKGKTGGRGI) has biased composition (gly residues).

Belongs to the universal ribosomal protein uL15 family. In terms of assembly, part of the 50S ribosomal subunit.

In terms of biological role, binds to the 23S rRNA. The protein is Large ribosomal subunit protein uL15 of Rickettsia peacockii (strain Rustic).